The chain runs to 31 residues: Potassium channel toxin alpha-KTx 5.4 (31 aa).

Cystine bridges form between C3-C21, C8-C26, and C12-C28. Residues 6 to 9 form a [R/K]XCQ motif region; sequence RRCE. Position 31 is a tyrosine amide (Y31).

This sequence belongs to the short scorpion toxin superfamily. Potassium channel inhibitor family. Alpha-KTx 05 subfamily. In terms of tissue distribution, expressed by the venom gland.

The protein localises to the secreted. Its function is as follows. Blocks small conductance calcium-activated potassium channels. Shows activity on KCa2.2/KCNN2 (IC(50)=0.0243 nM), KCa2.3/KCNN3 (IC(50)=1.7 nM), and KCa2.1/KCNN1 (IC(50)=42 nM). Induces cell death when tested on human T lymphoblastic leukemia Jurkat E6.1 and human breast cancer MDA-MB-231 cell lines which constituvely express KCa2.2/KCNN2, but not on human peripheral blood lymphocytes (which do not express KCa2.2/KCNN2). This chain is Potassium channel toxin alpha-KTx 5.4, found in Hottentotta tamulus (Eastern Indian scorpion).